The sequence spans 211 residues: MNKLIDFSKGLVPVILQHAQTDSVLMLGYMNEEAYQKTLKEKKVTFFSRSKQRLWTKGETSGHFQHVESIHLDCDQDAILIKVMPQGPTCHTGSLSCFNSEIESRFKIQALAQTIHQSAKANQSNSYTQYLLKEGIEKISKKFGEEAFEVVIGAIKHNREEVINETADVMYHLFVLLHSLDIPFSEVEQVLAHRHQKRNNFKGERKEVREW.

Residues 1 to 107 (MNKLIDFSKG…FNSEIESRFK (107 aa)) form a phosphoribosyl-AMP cyclohydrolase region. Residues 108–211 (IQALAQTIHQ…KGERKEVREW (104 aa)) form a phosphoribosyl-ATP pyrophosphohydrolase region.

The protein in the N-terminal section; belongs to the PRA-CH family. In the C-terminal section; belongs to the PRA-PH family.

It localises to the cytoplasm. It carries out the reaction 1-(5-phospho-beta-D-ribosyl)-ATP + H2O = 1-(5-phospho-beta-D-ribosyl)-5'-AMP + diphosphate + H(+). It catalyses the reaction 1-(5-phospho-beta-D-ribosyl)-5'-AMP + H2O = 1-(5-phospho-beta-D-ribosyl)-5-[(5-phospho-beta-D-ribosylamino)methylideneamino]imidazole-4-carboxamide. The protein operates within amino-acid biosynthesis; L-histidine biosynthesis; L-histidine from 5-phospho-alpha-D-ribose 1-diphosphate: step 2/9. Its pathway is amino-acid biosynthesis; L-histidine biosynthesis; L-histidine from 5-phospho-alpha-D-ribose 1-diphosphate: step 3/9. The chain is Histidine biosynthesis bifunctional protein HisIE from Staphylococcus epidermidis (strain ATCC 35984 / DSM 28319 / BCRC 17069 / CCUG 31568 / BM 3577 / RP62A).